A 469-amino-acid chain; its full sequence is tRNA-2-methylthio-N(6)-dimethylallyladenosine synthase (469 aa).

One can recognise an MTTase N-terminal domain in the interval 22–142 (RKVFIKTYGC…LPEALRRAQQ (121 aa)). Positions 31, 67, 105, 183, 187, and 190 each coordinate [4Fe-4S] cluster. Residues 169 to 401 (RARGVTAFLT…QALLLKQQQE (233 aa)) form the Radical SAM core domain. The region spanning 404–466 (ESCIGKEIDL…TNSLFAERAE (63 aa)) is the TRAM domain.

The protein belongs to the methylthiotransferase family. MiaB subfamily. As to quaternary structure, monomer. It depends on [4Fe-4S] cluster as a cofactor.

It is found in the cytoplasm. It carries out the reaction N(6)-dimethylallyladenosine(37) in tRNA + (sulfur carrier)-SH + AH2 + 2 S-adenosyl-L-methionine = 2-methylsulfanyl-N(6)-dimethylallyladenosine(37) in tRNA + (sulfur carrier)-H + 5'-deoxyadenosine + L-methionine + A + S-adenosyl-L-homocysteine + 2 H(+). Functionally, catalyzes the methylthiolation of N6-(dimethylallyl)adenosine (i(6)A), leading to the formation of 2-methylthio-N6-(dimethylallyl)adenosine (ms(2)i(6)A) at position 37 in tRNAs that read codons beginning with uridine. This is tRNA-2-methylthio-N(6)-dimethylallyladenosine synthase from Rhizobium etli (strain CIAT 652).